Consider the following 278-residue polypeptide: HTH-type transcriptional activator RhaS (278 aa).

The HTH araC/xylS-type domain occupies 174–272; the sequence is NLLLAWLEDH…NWSPRDIRQG (99 aa). DNA-binding regions (H-T-H motif) lie at residues 191–212 and 239–262; these read DAVAEQFSLSLRTLHRQLKQQT and VTDIAYRCGFSDSNHFSTLFRREF.

In terms of assembly, binds DNA as a dimer.

The protein resides in the cytoplasm. Activates expression of the rhaBAD and rhaT operons. The chain is HTH-type transcriptional activator RhaS from Escherichia coli (strain SE11).